The sequence spans 218 residues: Thiopurine S-methyltransferase (218 aa).

4 residues coordinate S-adenosyl-L-methionine: Trp-10, Leu-45, Glu-66, and Arg-123.

Belongs to the class I-like SAM-binding methyltransferase superfamily. TPMT family.

The protein localises to the cytoplasm. The enzyme catalyses S-adenosyl-L-methionine + a thiopurine = S-adenosyl-L-homocysteine + a thiopurine S-methylether.. The polypeptide is Thiopurine S-methyltransferase (Shewanella baltica (strain OS195)).